We begin with the raw amino-acid sequence, 238 residues long: Neuromodulin (238 aa).

Residues 1-238 form a disordered region; it reads MLCCMRRTKQ…EEPEADQEHA (238 aa). Residues cysteine 3 and cysteine 4 are each lipidated (S-palmitoyl cysteine). Residues 9 to 32 show a composition bias toward basic and acidic residues; sequence KQVEKNDEDQKIEQDGIKPEDKAH. In terms of domain architecture, IQ spans 31–60; that stretch reads AHKAATKIQASFRGHITRKKLKGEKKDDAQ. Serine 41 is subject to Phosphoserine; by PHK and PKC. Basic and acidic residues predominate over residues 54-83; sequence EKKDDAQAAEAEANKKDEAPVADGVEKKGE. Positions 84-95 are enriched in low complexity; it reads GTTATEAAPATG. Residues 97–116 are compositionally biased toward basic and acidic residues; it reads KPDEPGKAGETPSEEKKGEG. The span at 119 to 130 shows a compositional bias: low complexity; it reads ATEQAAPQAPAS. The span at 139 to 154 shows a compositional bias: polar residues; sequence ETESATKASTDNSPSS. 3 positions are modified to phosphoserine: serine 151, serine 153, and serine 154. Residues 155–167 show a composition bias toward basic and acidic residues; sequence KAEDAPAKEEPKQ. The span at 168 to 199 shows a compositional bias: low complexity; it reads ADVPAAVTAAAATTPAAEDAAAKATAQPPTET. At threonine 181 the chain carries Phosphothreonine. A phosphoserine; by CK2 mark is found at serine 202 and serine 203. Over residues 213–225 the composition is skewed to basic and acidic residues; it reads DETKPKESARQDE. The segment covering 226–238 has biased composition (acidic residues); the sequence is GKEEEPEADQEHA.

This sequence belongs to the neuromodulin family. Identified in a complex containing FGFR4, NCAM1, CDH2, PLCG1, FRS2, SRC, SHC1, GAP43 and CTTN. Interacts (via IQ domain) with calmodulin. Binds calmodulin with a greater affinity in the absence of Ca(2+) than in its presence. Phosphorylated. Phosphorylation of this protein by a protein kinase C is specifically correlated with certain forms of synaptic plasticity. In terms of processing, palmitoylated by ZDHHC3. Palmitoylation is regulated by ARF6 and is essential for plasma membrane association and axonal and dendritic filopodia induction. Deacylated by LYPLA2.

It localises to the cell membrane. The protein localises to the cell projection. It is found in the growth cone membrane. The protein resides in the synapse. Its subcellular location is the filopodium membrane. It localises to the perikaryon. The protein localises to the dendrite. It is found in the axon. The protein resides in the cytoplasm. Functionally, this protein is associated with nerve growth. It is a major component of the motile 'growth cones' that form the tips of elongating axons. Plays a role in axonal and dendritic filopodia induction. The protein is Neuromodulin (GAP43) of Macaca fascicularis (Crab-eating macaque).